The primary structure comprises 475 residues: Ribulose bisphosphate carboxylase large chain (475 aa).

A propeptide spanning residues 1–2 (MS) is cleaved from the precursor. N-acetylproline is present on proline 3. N6,N6,N6-trimethyllysine is present on lysine 14. Positions 123 and 173 each coordinate substrate. Lysine 175 functions as the Proton acceptor in the catalytic mechanism. Lysine 177 provides a ligand contact to substrate. Residues lysine 201, aspartate 203, and glutamate 204 each contribute to the Mg(2+) site. At lysine 201 the chain carries N6-carboxylysine. Catalysis depends on histidine 294, which acts as the Proton acceptor. Residues arginine 295, histidine 327, and serine 379 each coordinate substrate.

It belongs to the RuBisCO large chain family. Type I subfamily. In terms of assembly, heterohexadecamer of 8 large chains and 8 small chains. Mg(2+) is required as a cofactor.

It localises to the plastid. Its subcellular location is the chloroplast. It catalyses the reaction 2 (2R)-3-phosphoglycerate + 2 H(+) = D-ribulose 1,5-bisphosphate + CO2 + H2O. It carries out the reaction D-ribulose 1,5-bisphosphate + O2 = 2-phosphoglycolate + (2R)-3-phosphoglycerate + 2 H(+). Its function is as follows. RuBisCO catalyzes two reactions: the carboxylation of D-ribulose 1,5-bisphosphate, the primary event in carbon dioxide fixation, as well as the oxidative fragmentation of the pentose substrate in the photorespiration process. Both reactions occur simultaneously and in competition at the same active site. This Bazzania trilobata (Greater whipwort) protein is Ribulose bisphosphate carboxylase large chain.